We begin with the raw amino-acid sequence, 337 residues long: Mitochondrial metalloendopeptidase OMA1 (337 aa).

Residues 1–68 (MFLNKYISNY…QPNPRDKRFQ (68 aa)) lie on the Mitochondrial matrix side of the membrane. Residues 69–89 (WIFGALIAGGGVYYFTHLEYV) form a helical membrane-spanning segment. The Mitochondrial intermembrane segment spans residues 90–337 (PISNRRRFND…MLQSFKEVHW (248 aa)). H195 serves as a coordination point for Zn(2+). Residue E196 is part of the active site. Zn(2+)-binding residues include H199 and E250. C265 and C321 are joined by a disulfide.

The protein belongs to the peptidase M48 family. Zn(2+) serves as cofactor.

Its subcellular location is the mitochondrion inner membrane. With respect to regulation, protease activity is induced in response to various mitochondrial stress. Protease that is part of the quality control system in the inner membrane of mitochondria. Cleaves and thereby promotes the turnover of mistranslated or misfolded membrane protein. The sequence is that of Mitochondrial metalloendopeptidase OMA1 from Schizosaccharomyces pombe (strain 972 / ATCC 24843) (Fission yeast).